The chain runs to 664 residues: Macoilin (664 aa).

A run of 4 helical transmembrane segments spans residues 28 to 48, 75 to 95, 120 to 140, and 154 to 174; these read TFLY…DFVL, AFSV…LLFI, VCLP…AIRF, and FAAH…KSYV. The span at 253–265 shows a compositional bias: basic and acidic residues; the sequence is REKGKEKDKDAKK. Residues 253-274 are disordered; that stretch reads REKGKEKDKDAKKHNLGINNNN. At serine 305 the chain carries Phosphoserine. The segment covering 320 to 348 has biased composition (polar residues); sequence KNYKNASGVVNSSPRSHSATNGSIPSSSS. Positions 320 to 375 are disordered; it reads KNYKNASGVVNSSPRSHSATNGSIPSSSSKNEKKQKCTSKSPSTHKDLMENCIPNN. Residue asparagine 324 is glycosylated (N-linked (GlcNAc...) asparagine). Serine 332 carries the post-translational modification Phosphoserine. 2 N-linked (GlcNAc...) asparagine glycosylation sites follow: asparagine 340 and asparagine 452. The interval 630 to 664 is disordered; it reads TSPLSPVSPHYSSKFVETSPSGLDPNASVYQPLKK. A phosphoserine mark is found at serine 631 and serine 634. N-linked (GlcNAc...) asparagine glycosylation is present at asparagine 655.

The protein belongs to the macoilin family.

The protein localises to the rough endoplasmic reticulum membrane. Its subcellular location is the nucleus membrane. Its function is as follows. Plays a role in the regulation of neuronal activity. In Canis lupus familiaris (Dog), this protein is Macoilin (MACO1).